Consider the following 176-residue polypeptide: Nucleoside triphosphate/diphosphate phosphatase (176 aa).

Residue R23 is the Proton donor of the active site. 6 residues coordinate Mg(2+): N87, D103, D105, D107, D120, and E123.

Belongs to the Ntdp family. It depends on Mg(2+) as a cofactor.

It catalyses the reaction a ribonucleoside 5'-triphosphate + H2O = a ribonucleoside 5'-diphosphate + phosphate + H(+). It carries out the reaction a ribonucleoside 5'-diphosphate + H2O = a ribonucleoside 5'-phosphate + phosphate + H(+). Its function is as follows. Has nucleoside phosphatase activity towards nucleoside triphosphates and nucleoside diphosphates. The polypeptide is Nucleoside triphosphate/diphosphate phosphatase (Bacillus licheniformis (strain ATCC 14580 / DSM 13 / JCM 2505 / CCUG 7422 / NBRC 12200 / NCIMB 9375 / NCTC 10341 / NRRL NRS-1264 / Gibson 46)).